Reading from the N-terminus, the 523-residue chain is Cytochrome P450 monooxygenase ple5B (523 aa).

Residues 16-33 (IAAAAAGSAVAVYKLLQL) traverse the membrane as a helical segment. N-linked (GlcNAc...) asparagine glycans are attached at residues asparagine 82, asparagine 103, asparagine 122, asparagine 295, asparagine 379, and asparagine 423. Cysteine 446 is a heme binding site.

This sequence belongs to the cytochrome P450 family. Requires heme as cofactor.

It is found in the membrane. Its pathway is secondary metabolite biosynthesis; terpenoid biosynthesis. Cytochrome P450 monooxygenase; part of the gene cluster that mediates the biosynthesis of pleuromutilin, a tricyclic diterpene showing antibacterial properties. The geranylgeranyl diphosphate (GGPP) synthase ple4 catalyzes the first step in pleuromutilin biosynthesis. GGPP is then substrate of the premutilin synthase (PS) ple3 to yield premutilin. Premutilin synthase is a bifunctional enzyme composed of the fusion of a class II diterpene cyclase (DTC) and a class I diterpene synthase (DTS), with the corresponding domains and active sites containing characteristic aspartate-rich motifs. GGPP is first converted to mutildienyl-diphosphate (MPP) at the class II DTC site. MPP is subsequently further cyclized at the class I DTS site, followed by a 1,5-hydride shift and addition of water prior to terminating deprotonation, to yield premutilin. The cytochrome P450 monooxygenases ple5 and ple6 hydroxylate premutilin at C-11 and C-3, respectively, producing 11-hydroxypremutilin and 3-hydroxypremutilin. The combination of the actions of both ple5 and ple6 leads to the production of 3,11-dihydroxypremutilin. The short chain dehydrogenase ple7 further converts 3,11-dihydroxypremutilin into mutilin. The acetyltransferase ple2 then acetylates mutilin to produce 14-O-acetylmutilin. Finally, the cytochrome P450 monooxygenase ple1 catalyzes hydroxylation on the alpha position of the acetyl side chain of 14-O-acetylmutilin to yield pleuromutilin. This chain is Cytochrome P450 monooxygenase ple5B, found in Rhodocybe pseudopiperita (Clitopilus pseudopiperitus).